Consider the following 700-residue polypeptide: Elongation factor G 2 (700 aa).

The region spanning 8–290 is the tr-type G domain; the sequence is ERYRNIGISA…AVIDFLPSPV (283 aa). GTP-binding positions include 17–24, 88–92, and 142–145; these read AHIDAGKT, DTPGH, and NKMD.

The protein belongs to the TRAFAC class translation factor GTPase superfamily. Classic translation factor GTPase family. EF-G/EF-2 subfamily.

The protein localises to the cytoplasm. Catalyzes the GTP-dependent ribosomal translocation step during translation elongation. During this step, the ribosome changes from the pre-translocational (PRE) to the post-translocational (POST) state as the newly formed A-site-bound peptidyl-tRNA and P-site-bound deacylated tRNA move to the P and E sites, respectively. Catalyzes the coordinated movement of the two tRNA molecules, the mRNA and conformational changes in the ribosome. The chain is Elongation factor G 2 from Burkholderia orbicola (strain AU 1054).